The following is a 507-amino-acid chain: NADH-quinone oxidoreductase subunit N (507 aa).

Transmembrane regions (helical) follow at residues 17-37 (LVTLSPLILLAAAAVVVMLTA), 46-66 (VMILTLAGLVLSFMALFLSQG), 81-101 (YALFFIGLIVVATFVVAILCY), 113-133 (ALYILLLLAALGGGVLVASSH), 134-154 (FASFLLGLELLSISLFALIAY), 168-188 (YLILAGFSSGLLLFGMALVYA), 190-210 (LGTMQFVKIGTMLAAPGAALE), 211-231 (LYGLAGLALIVTGVGFKLALV), 245-265 (PVPITAFIATASKGAMLVLLL), 279-299 (ITFALSLIAVATILVGNLLAL), 307-327 (ILAYSSIAQLGYLLVGFLAFD), 334-354 (VAYFLTAYFVTMLGAFGVVTV), 392-412 (AGVFTAMLLSLAGIPLTMGFI), 425-445 (SLWMPVITLVIGSIIGLFYYM), and 478-498 (LAALALLLIWLGIFPAQLIGV).

This sequence belongs to the complex I subunit 2 family. NDH-1 is composed of 14 different subunits. Subunits NuoA, H, J, K, L, M, N constitute the membrane sector of the complex.

Its subcellular location is the cell inner membrane. It catalyses the reaction a quinone + NADH + 5 H(+)(in) = a quinol + NAD(+) + 4 H(+)(out). NDH-1 shuttles electrons from NADH, via FMN and iron-sulfur (Fe-S) centers, to quinones in the respiratory chain. The immediate electron acceptor for the enzyme in this species is believed to be ubiquinone. Couples the redox reaction to proton translocation (for every two electrons transferred, four hydrogen ions are translocated across the cytoplasmic membrane), and thus conserves the redox energy in a proton gradient. The sequence is that of NADH-quinone oxidoreductase subunit N from Nitrosospira multiformis (strain ATCC 25196 / NCIMB 11849 / C 71).